An 813-amino-acid polypeptide reads, in one-letter code: Histone acetyltransferase KAT2B (813 aa).

2 disordered regions span residues M1–A55 and N380–R423. Residues A32 to A46 are compositionally biased toward low complexity. Residues N380–R391 show a composition bias toward polar residues. Over residues P406–R423 the composition is skewed to basic and acidic residues. One can recognise an N-acetyltransferase domain in the interval L484–N632. E551 acts as the Proton donor/acceptor in catalysis. Residues C555 to V557, Q562 to T568, and Y593 to G596 each bind acetyl-CoA. The Bromo domain occupies K704–A808.

The protein belongs to the acetyltransferase family. GCN5 subfamily. Interacts with BCAS3. Interacts with SIRT1. Interacts with EP300, CREBBP and DDX17. Component of a large chromatin remodeling complex, at least composed of MYSM1, KAT2B/PCAF, RBM10 and KIF11/TRIP5. Interacts with KLF1; the interaction does not acetylate KLF1 and there is no enhancement of its transactivational activity. Interacts with NFE4. Interacts with MECOM. Interacts with NR2C2 (hypophosphorylated and unsumoylated form); the interaction promotes the transactivation activity of NR2C2. Interacts with NFE4. Interacts with MECOM. Interacts with E2F1; the interaction acetylates E2F1 augmenting its DNA-binding and transcriptional activity. Interacts with NPAS2, BMAL1 and CLOCK. Interacts (unsumoylated form) with NR2C1; the interaction promotes transactivation activity. Interacts with CEBPB. Interacts with NR4A3. Interacts with TBX5. Interacts with PLK4. Interacts with RB1; this interaction leads to RB1 acetylation. Interacts with VRK1.

It is found in the nucleus. It localises to the cytoplasm. The protein localises to the cytoskeleton. The protein resides in the microtubule organizing center. Its subcellular location is the centrosome. The enzyme catalyses L-lysyl-[histone] + acetyl-CoA = N(6)-acetyl-L-lysyl-[histone] + CoA + H(+). It carries out the reaction L-lysyl-[protein] + acetyl-CoA = N(6)-acetyl-L-lysyl-[protein] + CoA + H(+). The catalysed reaction is spermidine + acetyl-CoA = N(8)-acetylspermidine + CoA + H(+). Its function is as follows. Functions as a histone acetyltransferase (HAT) to promote transcriptional activation. Has significant histone acetyltransferase activity with core histones (H3 and H4), and also with nucleosome core particles. Has a a strong preference for acetylation of H3 at 'Lys-9' (H3K9ac). Also acetylates non-histone proteins, such as ACLY, MAPRE1/EB1, PLK4, RRP9/U3-55K and TBX5. Acts as a circadian transcriptional coactivator which enhances the activity of the circadian transcriptional activators: NPAS2-BMAL1 and CLOCK-BMAL1 heterodimers. Involved in heart and limb development by mediating acetylation of TBX5, acetylation regulating nucleocytoplasmic shuttling of TBX5. Acts as a negative regulator of centrosome amplification by mediating acetylation of PLK4. Acetylates RRP9/U3-55K, a core subunit of the U3 snoRNP complex, impairing pre-rRNA processing. Acetylates MAPRE1/EB1, promoting dynamic kinetochore-microtubule interactions in early mitosis. Also acetylates spermidine. In Mus musculus (Mouse), this protein is Histone acetyltransferase KAT2B.